The following is a 143-amino-acid chain: Hemoglobin subunit alpha-2 (143 aa).

N-acetylserine is present on Ser-2. A Globin domain is found at 2–143 (SLSAKDKATV…LALALSEKYR (142 aa)). His-60 provides a ligand contact to O2. Residue His-89 participates in heme b binding.

It belongs to the globin family. In terms of assembly, hb 2 is a heterotetramer of two alpha-2 and two beta-1 chains. Hb 3 is a heterotetramer of two alpha-2 and two beta-2 chains. Red blood cells.

Functionally, involved in oxygen transport from gills to the various peripheral tissues. The sequence is that of Hemoglobin subunit alpha-2 (hba2) from Boreogadus saida (Polar cod).